A 430-amino-acid chain; its full sequence is Sesquiterpene synthase 15 (430 aa).

Positions 182, 186, and 335 each coordinate Mg(2+). The short motif at 182–186 is the DDXXD motif element; it reads DDIYD.

This sequence belongs to the terpene synthase family. Tpsa subfamily. The cofactor is Mg(2+). Mn(2+) is required as a cofactor.

The protein operates within secondary metabolite biosynthesis; terpenoid biosynthesis. Sesquiterpene synthase involved in the biosynthesis of volatile compounds. No activity detected with geranyl diphosphate (GPP) and farnesyl diphosphate (FPP) as substrates. In Solanum lycopersicum (Tomato), this protein is Sesquiterpene synthase 15.